Reading from the N-terminus, the 292-residue chain is uncharacterized protein (292 aa).

Belongs to the glycosyltransferase 2 family. WaaE/KdtX subfamily.

This is an uncharacterized protein from Rickettsia prowazekii (strain Madrid E).